An 89-amino-acid chain; its full sequence is Small ribosomal subunit protein uS15 (89 aa).

Residues 1-10 (MSITAERKAE) are compositionally biased toward basic and acidic residues. The interval 1-24 (MSITAERKAEVIQGNANKAGDTGS) is disordered.

It belongs to the universal ribosomal protein uS15 family. Part of the 30S ribosomal subunit. Forms a bridge to the 50S subunit in the 70S ribosome, contacting the 23S rRNA.

One of the primary rRNA binding proteins, it binds directly to 16S rRNA where it helps nucleate assembly of the platform of the 30S subunit by binding and bridging several RNA helices of the 16S rRNA. Its function is as follows. Forms an intersubunit bridge (bridge B4) with the 23S rRNA of the 50S subunit in the ribosome. In Rhodopseudomonas palustris (strain BisB5), this protein is Small ribosomal subunit protein uS15.